The sequence spans 247 residues: ATP synthase subunit a, chloroplastic (247 aa).

5 helical membrane passes run 38–58 (QVLI…IIAV), 95–115 (VPFI…GALL), 134–154 (INTT…AGLS), 199–219 (LVVV…VMFL), and 220–240 (GLFT…AYIG).

The protein belongs to the ATPase A chain family. In terms of assembly, F-type ATPases have 2 components, CF(1) - the catalytic core - and CF(0) - the membrane proton channel. CF(1) has five subunits: alpha(3), beta(3), gamma(1), delta(1), epsilon(1). CF(0) has four main subunits: a, b, b' and c.

The protein localises to the plastid. It localises to the chloroplast thylakoid membrane. In terms of biological role, key component of the proton channel; it plays a direct role in the translocation of protons across the membrane. The polypeptide is ATP synthase subunit a, chloroplastic (Sorghum bicolor (Sorghum)).